Consider the following 103-residue polypeptide: MYAVFQSGGKQHRVSEGQTIRLEKLDIATGEAVEFDQVLMIANGEEINIGAPLVVGGVVKAEVVAHGRGEKIKIVKFRRRKHYRKQQGHRQWFTDVKITGISA.

The protein belongs to the bacterial ribosomal protein bL21 family. Part of the 50S ribosomal subunit. Contacts protein L20.

Functionally, this protein binds to 23S rRNA in the presence of protein L20. This is Large ribosomal subunit protein bL21 from Yersinia enterocolitica serotype O:8 / biotype 1B (strain NCTC 13174 / 8081).